A 187-amino-acid chain; its full sequence is Elongation factor P (187 aa).

This sequence belongs to the elongation factor P family.

Its subcellular location is the cytoplasm. It functions in the pathway protein biosynthesis; polypeptide chain elongation. Involved in peptide bond synthesis. Stimulates efficient translation and peptide-bond synthesis on native or reconstituted 70S ribosomes in vitro. Probably functions indirectly by altering the affinity of the ribosome for aminoacyl-tRNA, thus increasing their reactivity as acceptors for peptidyl transferase. The protein is Elongation factor P of Roseiflexus castenholzii (strain DSM 13941 / HLO8).